The primary structure comprises 226 residues: Ribonuclease 3 (226 aa).

Residues 7-129 (LPRLCRTLSY…IIGAVYLDSD (123 aa)) enclose the RNase III domain. Glu42 is a Mg(2+) binding site. Asp46 is an active-site residue. Asp115 and Glu118 together coordinate Mg(2+). The active site involves Glu118. The region spanning 156 to 226 (DAKTLLQEHL…AAQVLELLKK (71 aa)) is the DRBM domain.

It belongs to the ribonuclease III family. In terms of assembly, homodimer. The cofactor is Mg(2+).

Its subcellular location is the cytoplasm. The enzyme catalyses Endonucleolytic cleavage to 5'-phosphomonoester.. Its function is as follows. Digests double-stranded RNA. Involved in the processing of primary rRNA transcript to yield the immediate precursors to the large and small rRNAs (23S and 16S). Processes some mRNAs, and tRNAs when they are encoded in the rRNA operon. Processes pre-crRNA and tracrRNA of type II CRISPR loci if present in the organism. The polypeptide is Ribonuclease 3 (Shewanella baltica (strain OS223)).